We begin with the raw amino-acid sequence, 316 residues long: Vacuolar morphogenesis protein 7 (316 aa).

The PX domain occupies 1–124 (MAANSVGKMS…QDFLQLSKPN (124 aa)). Positions 168–186 (RARTKLHKLRERLEQDVQK) form a coiled coil. Residues 250 to 312 (MQMVRDQEQE…QIANKKARHF (63 aa)) enclose the t-SNARE coiled-coil homology domain.

As to quaternary structure, possibly multimeric. Associates with VAM3.

The protein localises to the vacuole. Its function is as follows. Essential for proper morphogenesis of the vacuole. May exist as structural reinforcement on the surface of the vacuolar membrane and be required for maintenance against rupture by osmotic pressure. The chain is Vacuolar morphogenesis protein 7 (VAM7) from Saccharomyces cerevisiae (strain ATCC 204508 / S288c) (Baker's yeast).